The chain runs to 43 residues: uncharacterized protein (43 aa).

A signal peptide spans 1 to 22 (MKRKIIAIGIFFRLFIIHIHFS).

This is an uncharacterized protein from Schizosaccharomyces pombe (strain 972 / ATCC 24843) (Fission yeast).